A 644-amino-acid chain; its full sequence is Threonine--tRNA ligase (644 aa).

Residues 1-61 (MPVITLPDGS…EKDTKLTIIT (61 aa)) enclose the TGS domain. The segment at 242 to 535 (DHRRIGADLD…LIEHYEGKFP (294 aa)) is catalytic. 3 residues coordinate Zn(2+): C335, H386, and H512.

The protein belongs to the class-II aminoacyl-tRNA synthetase family. As to quaternary structure, homodimer. Zn(2+) serves as cofactor.

It localises to the cytoplasm. The catalysed reaction is tRNA(Thr) + L-threonine + ATP = L-threonyl-tRNA(Thr) + AMP + diphosphate + H(+). In terms of biological role, catalyzes the attachment of threonine to tRNA(Thr) in a two-step reaction: L-threonine is first activated by ATP to form Thr-AMP and then transferred to the acceptor end of tRNA(Thr). Also edits incorrectly charged L-seryl-tRNA(Thr). The sequence is that of Threonine--tRNA ligase from Nitrosococcus oceani (strain ATCC 19707 / BCRC 17464 / JCM 30415 / NCIMB 11848 / C-107).